Here is a 323-residue protein sequence, read N- to C-terminus: Cytoskeleton protein RodZ (323 aa).

Residues 1 to 111 (MNTEASQDKT…LGKRRKKRDG (111 aa)) are Cytoplasmic-facing. The HTH cro/C1-type domain occupies 19–71 (LRQAREQLGLSQQAVAERLCLKMSTVRDIEEDNLSADLASTFVRGYIRSYAKL). Residues 30–49 (QQAVAERLCLKMSTVRDIEE) constitute a DNA-binding region (H-T-H motif). Residues 112-132 (WLMSFTWLIVFVVVGLTGAWW) form a helical; Signal-anchor for type II membrane protein membrane-spanning segment. Residues 133–323 (WQNHKAQQEE…RVARLTVAAQ (191 aa)) lie on the Periplasmic side of the membrane. 2 stretches are compositionally biased toward polar residues: residues 149–172 (QSSAQLSQNNEGQSVPLTDSNADN) and 179–214 (NGSTPVDTGVAPQQSQTPAVSGSATAQQPAVVSPSQ). The disordered stretch occupies residues 149 to 236 (QSSAQLSQNN…APLPTADAGV (88 aa)). Positions 215–234 (TTLPETTPAAPTAPLPTADA) are enriched in low complexity.

The protein belongs to the RodZ family.

It localises to the cell inner membrane. Its function is as follows. Cytoskeletal protein that is involved in cell-shape control through regulation of the length of the long axis. The sequence is that of Cytoskeleton protein RodZ from Serratia proteamaculans (strain 568).